Reading from the N-terminus, the 129-residue chain is HTH-type transcriptional regulator DdrOP3 (129 aa).

An HTH cro/C1-type domain is found at leucine 7–leucine 61. A DNA-binding region (H-T-H motif) is located at residues leucine 18–arginine 37.

Post-translationally, cleaved between Leu-106 and Arg-107 by the IrrE metalloprotease after exposure to radiation. Cleavage inactivates DdrOP3, leading to derepression of the target genes.

Functionally, repressor specific for genes preceded by a radiation/desiccation response motif (RDRM) site, which is present upstream of several radiation-induced genes. This is HTH-type transcriptional regulator DdrOP3 from Deinococcus deserti (strain DSM 17065 / CIP 109153 / LMG 22923 / VCD115).